The chain runs to 678 residues: Alpha-L-arabinofuranosidase 1 (678 aa).

The signal sequence occupies residues 1 to 33 (MDMESWKLLRSVCVLSFLLGSCFVYQSLRVVDA). The 88-residue stretch at 152–239 (NIEEGKKYKV…WIDQVSAMPV (88 aa)) folds into the CBM-cenC domain. 4 N-linked (GlcNAc...) asparagine glycosylation sites follow: Asn181, Asn362, Asn523, and Asn555.

This sequence belongs to the glycosyl hydrolase 51 family. As to expression, expressed in roots, leaves, flowers, stems, siliques and seedlings. Observed in zones of cell proliferation, the vascular system and floral abscission zones. Expressed in the guard cells in stems, in xylem vessels and parenchyma cells surrounding the vessels, in the cambium and in the phloem, but not in the secondary xylem.

Its subcellular location is the secreted. The protein localises to the extracellular space. It is found in the extracellular matrix. It carries out the reaction Hydrolysis of terminal non-reducing alpha-L-arabinofuranoside residues in alpha-L-arabinosides.. May be involved in the coordinated dissolution of the cell wall matrix during abscission and in the secondary cell wall formation in xylem vessels. Prefers arabinoxylan, but may also use pectic arabinans as substrates. This is Alpha-L-arabinofuranosidase 1 (ASD1) from Arabidopsis thaliana (Mouse-ear cress).